We begin with the raw amino-acid sequence, 335 residues long: Carboxylesterase 1 (335 aa).

Residues H90–G92 carry the Involved in the stabilization of the negatively charged intermediate by the formation of the oxyanion hole motif. Paraoxon-binding positions include G92–G93, S169, and A170. The active site involves S169. Active-site residues include D276 and H306.

Belongs to the 'GDXG' lipolytic enzyme family.

It catalyses the reaction a carboxylic ester + H2O = an alcohol + a carboxylate + H(+). With respect to regulation, is inhibited by the organophosphates paraoxon and dimethylchlorophosphate (DMCP). Carboxylesterase acting on esters with varying acyl chain length. This chain is Carboxylesterase 1 (CXE1), found in Actinidia eriantha (Velvet vine).